The following is a 401-amino-acid chain: MLPVNKDQVLLQNTVPPGCPPQVLSQFVNSPAPNLASLCPHPTLPSSHFPLPAPPQAYFFSSLTQTHSPGPHFSSDSNSDFVPPHSSSHPRSSSCFGQNYTYFGEKLPSPHSISPSNYQLCVSPPLTGSSSLSQLQHSSPHSCQSPSRLQDLQSPKITSPVPSSPSPRIQNNKQTWQWPQSGSIKSSRGAGVCVPSKVDPAEFKDSGTLTQALVDHVGRRRIARDLQIQFLQRLWLGTPGHAPVVEYPICLVCLQIRTPSCPTPKYKTVPQLLAFPQLLPCVQGQESGPLRIGIGFGLRLPRGQARALHLLPPKNSTPVGVESQEEALQRQKSTIQESVQITGTLFQARSLRSIDLQSPKPSQCSRSLLQEPRQVAASPKAGPSVSKRSVTLGSILRKSPS.

Polar residues predominate over residues proline 69–aspartate 80. Disordered stretches follow at residues proline 69–serine 93, serine 129–glycine 191, and glutamine 357–serine 401. 2 stretches are compositionally biased toward low complexity: residues proline 83–serine 93 and serine 129–serine 147. Composition is skewed to polar residues over residues arginine 148 to serine 186 and glutamine 357 to leucine 368.

The polypeptide is Proline-rich protein 30 (Prr30) (Mus musculus (Mouse)).